Consider the following 126-residue polypeptide: Small ribosomal subunit protein uS13 (126 aa).

Residues 91-126 (RHRRGLPVRGQRTSTNARTRKGPRRAIAGKKKPGKK) form a disordered region. Basic residues predominate over residues 108–126 (RTRKGPRRAIAGKKKPGKK).

The protein belongs to the universal ribosomal protein uS13 family. Part of the 30S ribosomal subunit. Forms a loose heterodimer with protein S19. Forms two bridges to the 50S subunit in the 70S ribosome.

Located at the top of the head of the 30S subunit, it contacts several helices of the 16S rRNA. In the 70S ribosome it contacts the 23S rRNA (bridge B1a) and protein L5 of the 50S subunit (bridge B1b), connecting the 2 subunits; these bridges are implicated in subunit movement. Contacts the tRNAs in the A and P-sites. This Streptomyces coelicolor (strain ATCC BAA-471 / A3(2) / M145) protein is Small ribosomal subunit protein uS13.